Here is a 275-residue protein sequence, read N- to C-terminus: MAIVKVKPTSPGRRAMVKVVNKDLHQGKPHAALLDTQSSTAGRNNNGRITTRHKGGGHKHHYRIVDFRRTKDGIPAKVERLEYDPNRSANIALVLYADGERRYIIAPKGLTVGQQLMSGSEAPIRAGNTLPIRNIPVGTTIHCIEMLPGKGAQMARSAGTSAMLLAREGVYAQVRLRSGEIRRVHIECRATIGEVGNEEHSLRQIGKAGANRWRGIRPTVRGVAMNPVDHPHGGGEGKTAAGRDPVSPWGTPTKGYRTRSNKRTTTMIVQRRHKR.

The span at threonine 36 to isoleucine 49 shows a compositional bias: polar residues. Disordered regions lie at residues threonine 36–lysine 59 and alanine 224–arginine 275. Over residues threonine 50–lysine 59 the composition is skewed to basic residues.

The protein belongs to the universal ribosomal protein uL2 family. In terms of assembly, part of the 50S ribosomal subunit. Forms a bridge to the 30S subunit in the 70S ribosome.

One of the primary rRNA binding proteins. Required for association of the 30S and 50S subunits to form the 70S ribosome, for tRNA binding and peptide bond formation. It has been suggested to have peptidyltransferase activity; this is somewhat controversial. Makes several contacts with the 16S rRNA in the 70S ribosome. The protein is Large ribosomal subunit protein uL2 of Burkholderia vietnamiensis (strain G4 / LMG 22486) (Burkholderia cepacia (strain R1808)).